The primary structure comprises 355 residues: Ferrochelatase (355 aa).

Residues histidine 214 and glutamate 295 each contribute to the Fe cation site.

Belongs to the ferrochelatase family.

It is found in the cytoplasm. The enzyme catalyses heme b + 2 H(+) = protoporphyrin IX + Fe(2+). It participates in porphyrin-containing compound metabolism; protoheme biosynthesis; protoheme from protoporphyrin-IX: step 1/1. Its function is as follows. Catalyzes the ferrous insertion into protoporphyrin IX. In Burkholderia thailandensis (strain ATCC 700388 / DSM 13276 / CCUG 48851 / CIP 106301 / E264), this protein is Ferrochelatase.